The primary structure comprises 265 residues: Thiazole synthase (265 aa).

Lys-106 functions as the Schiff-base intermediate with DXP in the catalytic mechanism. 1-deoxy-D-xylulose 5-phosphate contacts are provided by residues Gly-167, 193–194 (AG), and 215–216 (NS).

Belongs to the ThiG family. As to quaternary structure, homotetramer. Forms heterodimers with either ThiH or ThiS.

It localises to the cytoplasm. The catalysed reaction is [ThiS sulfur-carrier protein]-C-terminal-Gly-aminoethanethioate + 2-iminoacetate + 1-deoxy-D-xylulose 5-phosphate = [ThiS sulfur-carrier protein]-C-terminal Gly-Gly + 2-[(2R,5Z)-2-carboxy-4-methylthiazol-5(2H)-ylidene]ethyl phosphate + 2 H2O + H(+). The protein operates within cofactor biosynthesis; thiamine diphosphate biosynthesis. Catalyzes the rearrangement of 1-deoxy-D-xylulose 5-phosphate (DXP) to produce the thiazole phosphate moiety of thiamine. Sulfur is provided by the thiocarboxylate moiety of the carrier protein ThiS. In vitro, sulfur can be provided by H(2)S. The sequence is that of Thiazole synthase from Prochlorococcus marinus subsp. pastoris (strain CCMP1986 / NIES-2087 / MED4).